We begin with the raw amino-acid sequence, 166 residues long: EIGSTIPNATFAYVPYSPELEDHKVCGMPTSFQSHERWKGKKVVIVAVPGAFTPTCTANHVPPYVEKIQELKSKGVDEVVVISANDPFVLSAWGITEHAKDNLTFAQDVNCEFSKHFNATLDLSSKGMGLRTARYALIANDLKVEYFGIDEGEPKQSSAATVLSKL.

In terms of domain architecture, Thioredoxin spans 1 to 166 (EIGSTIPNAT…SSAATVLSKL (166 aa)). Cysteine 56 acts as the Cysteine sulfenic acid (-SOH) intermediate in catalysis. The Microbody targeting signal signature appears at 164–166 (SKL).

It belongs to the peroxiredoxin family. Prx5 subfamily. In terms of assembly, homodimer; disulfide-linked, upon oxidation.

The enzyme catalyses a hydroperoxide + [thioredoxin]-dithiol = an alcohol + [thioredoxin]-disulfide + H2O. Functionally, thiol-specific peroxidase that catalyzes the reduction of hydrogen peroxide and organic hydroperoxides to water and alcohols, respectively. Plays a role in cell protection against oxidative stress by detoxifying peroxides and as sensor of hydrogen peroxide-mediated signaling events. The chain is Putative peroxiredoxin from Malassezia furfur (Pityriasis versicolor infection agent).